Here is a 305-residue protein sequence, read N- to C-terminus: ATP synthase gamma chain (305 aa).

It belongs to the ATPase gamma chain family. In terms of assembly, F-type ATPases have 2 components, CF(1) - the catalytic core - and CF(0) - the membrane proton channel. CF(1) has five subunits: alpha(3), beta(3), gamma(1), delta(1), epsilon(1). CF(0) has three main subunits: a, b and c.

It localises to the cell membrane. In terms of biological role, produces ATP from ADP in the presence of a proton gradient across the membrane. The gamma chain is believed to be important in regulating ATPase activity and the flow of protons through the CF(0) complex. This is ATP synthase gamma chain from Streptomyces avermitilis (strain ATCC 31267 / DSM 46492 / JCM 5070 / NBRC 14893 / NCIMB 12804 / NRRL 8165 / MA-4680).